The following is a 217-amino-acid chain: Protein MODIFYING WALL LIGNIN-2 (217 aa).

Positions 1 to 23 are cleaved as a signal peptide; it reads MHNLFLYSVVFSLGLVSFITCFA. Residues 24–51 are Cytoplasmic-facing; sequence AEFKRTQKEDIRWDTERNCYVPGSHAFG. The helical transmembrane segment at 52–72 threads the bilayer; the sequence is LGSAAVLCFCLAQIVGNIVVF. Topologically, residues 73 to 94 are extracellular; the sequence is RNHRTRTKREDGYKITDLTLPT. A helical transmembrane segment spans residues 95–115; the sequence is VLLLLSWSNFVVVVLILSTAI. Topologically, residues 116–137 are cytoplasmic; it reads SMSRAQAYGEGWLDEDCYLVKD. A helical transmembrane segment spans residues 138–158; it reads GVFAASGCLAILGLGALTISA. Topologically, residues 159–217 are extracellular; sequence TRIKVKKQQQLVQVVIKDQNQDQRRSMEEEQKHDEHQTNKSESVIHLVEEVSSTNISRI. Residues N197 and N213 are each glycosylated (N-linked (GlcNAc...) asparagine).

The protein belongs to the DESIGUAL family.

It localises to the cell membrane. In terms of biological role, together with MWL1, contributes to secondary cell wall biology, specifically lignin biosynthesis. In Arabidopsis thaliana (Mouse-ear cress), this protein is Protein MODIFYING WALL LIGNIN-2.